We begin with the raw amino-acid sequence, 113 residues long: Ribonuclease P protein component (113 aa).

It belongs to the RnpA family. In terms of assembly, consists of a catalytic RNA component (M1 or rnpB) and a protein subunit.

The catalysed reaction is Endonucleolytic cleavage of RNA, removing 5'-extranucleotides from tRNA precursor.. Its function is as follows. RNaseP catalyzes the removal of the 5'-leader sequence from pre-tRNA to produce the mature 5'-terminus. It can also cleave other RNA substrates such as 4.5S RNA. The protein component plays an auxiliary but essential role in vivo by binding to the 5'-leader sequence and broadening the substrate specificity of the ribozyme. The sequence is that of Ribonuclease P protein component from Vesicomyosocius okutanii subsp. Calyptogena okutanii (strain HA).